The primary structure comprises 258 residues: 6-phosphogluconolactonase (258 aa).

It belongs to the glucosamine/galactosamine-6-phosphate isomerase family. 6-phosphogluconolactonase subfamily.

The catalysed reaction is 6-phospho-D-glucono-1,5-lactone + H2O = 6-phospho-D-gluconate + H(+). It functions in the pathway carbohydrate degradation; pentose phosphate pathway; D-ribulose 5-phosphate from D-glucose 6-phosphate (oxidative stage): step 2/3. Its function is as follows. Hydrolysis of 6-phosphogluconolactone to 6-phosphogluconate. This chain is 6-phosphogluconolactonase (pgl), found in Chlamydia pneumoniae (Chlamydophila pneumoniae).